A 444-amino-acid polypeptide reads, in one-letter code: N-succinylarginine dihydrolase (444 aa).

Residues 19 to 28 (AGLSFGNVAS), Asn110, and 137 to 138 (HR) each bind substrate. The active site involves Glu174. Arg214 is a binding site for substrate. His250 is a catalytic residue. Substrate-binding residues include Asp252 and Asn362. The active-site Nucleophile is Cys368.

This sequence belongs to the succinylarginine dihydrolase family. In terms of assembly, homodimer.

The catalysed reaction is N(2)-succinyl-L-arginine + 2 H2O + 2 H(+) = N(2)-succinyl-L-ornithine + 2 NH4(+) + CO2. It participates in amino-acid degradation; L-arginine degradation via AST pathway; L-glutamate and succinate from L-arginine: step 2/5. Catalyzes the hydrolysis of N(2)-succinylarginine into N(2)-succinylornithine, ammonia and CO(2). This Shewanella denitrificans (strain OS217 / ATCC BAA-1090 / DSM 15013) protein is N-succinylarginine dihydrolase.